Reading from the N-terminus, the 246-residue chain is Sulfate transporter CysZ (246 aa).

A run of 4 helical transmembrane segments spans residues 24–44 (LFVL…IGFA), 69–89 (IVWP…FTMV), 148–168 (LLVL…WILF), and 214–234 (LLIP…ATLF).

This sequence belongs to the CysZ family.

The protein localises to the cell inner membrane. Functionally, high affinity, high specificity proton-dependent sulfate transporter, which mediates sulfate uptake. Provides the sulfur source for the cysteine synthesis pathway. This is Sulfate transporter CysZ from Pseudomonas aeruginosa (strain ATCC 15692 / DSM 22644 / CIP 104116 / JCM 14847 / LMG 12228 / 1C / PRS 101 / PAO1).